Consider the following 677-residue polypeptide: Methionine--tRNA ligase (677 aa).

The 'HIGH' region signature appears at 15–25; the sequence is PYANGSIHLGH. Zn(2+)-binding residues include Cys-146, Cys-149, Cys-159, and Cys-162. The 'KMSKS' region motif lies at 333-337; the sequence is KMSKS. Lys-336 lines the ATP pocket. The tRNA-binding domain maps to 575-677; it reads DFAKVDLRVA…AGAKPGHQVK (103 aa).

This sequence belongs to the class-I aminoacyl-tRNA synthetase family. MetG type 1 subfamily. As to quaternary structure, homodimer. Zn(2+) is required as a cofactor.

The protein localises to the cytoplasm. It carries out the reaction tRNA(Met) + L-methionine + ATP = L-methionyl-tRNA(Met) + AMP + diphosphate. Functionally, is required not only for elongation of protein synthesis but also for the initiation of all mRNA translation through initiator tRNA(fMet) aminoacylation. The chain is Methionine--tRNA ligase from Escherichia coli (strain ATCC 8739 / DSM 1576 / NBRC 3972 / NCIMB 8545 / WDCM 00012 / Crooks).